A 159-amino-acid polypeptide reads, in one-letter code: Vasotocin-neurophysin VT (159 aa).

An N-terminal signal peptide occupies residues 1–17 (TAPVPACFLCLLALSSA). A disulfide bridge links Cys-18 with Cys-23. Glycine amide is present on Gly-26. 7 disulfide bridges follow: Cys-39-Cys-83, Cys-42-Cys-56, Cys-50-Cys-73, Cys-57-Cys-63, Cys-90-Cys-102, Cys-96-Cys-114, and Cys-103-Cys-108. Residue Asn-129 is glycosylated (N-linked (GlcNAc...) asparagine).

It belongs to the vasopressin/oxytocin family. Seven disulfide bonds are present in neurophysin.

Its subcellular location is the secreted. In terms of biological role, vasotocin is an antidiuretic hormone. This is Vasotocin-neurophysin VT from Bufo japonicus (Japanese common toad).